Here is a 381-residue protein sequence, read N- to C-terminus: Opsin Rh2 (381 aa).

Topologically, residues 1-56 are extracellular; the sequence is MERSLLPEPPLAMALLGPRFEAQTGGNRSVLDNVLPDMAPLVNPYWSRFAPMDPTM. N27 carries an N-linked (GlcNAc...) asparagine glycan. A helical membrane pass occupies residues 57–81; it reads SKILGLFTLVILIISCCGNGVVVYI. At 82 to 93 the chain is on the cytoplasmic side; sequence FGGTKSLRTPAN. The chain crosses the membrane as a helical span at residues 94–119; that stretch reads LLVLNLAFSDFCMMASQSPVMIINFY. The Extracellular portion of the chain corresponds to 120 to 133; it reads YETWVLGPLWCDIY. C130 and C207 are joined by a disulfide. Residues 134-153 form a helical membrane-spanning segment; sequence AACGSLFGCVSIWSMCMIAF. Residues 154 to 172 are Cytoplasmic-facing; that stretch reads DRYNVIVKGINGTPMTIKT. A helical membrane pass occupies residues 173 to 196; that stretch reads SIMKIAFIWMMAVFWTIMPLIGWS. Topologically, residues 197 to 220 are extracellular; sequence SYVPEGNLTACSIDYMTRQWNPRS. The helical transmembrane segment at 221 to 248 threads the bilayer; the sequence is YLITYSLFVYYTPLFMICYSYWFIIATV. Topologically, residues 249–283 are cytoplasmic; the sequence is AAHEKAMRDQAKKMNVKSLRSSEDCDKSAENKLAK. A helical transmembrane segment spans residues 284 to 307; that stretch reads VALTTISLWFMAWTPYLIICYFGL. Residues 308–314 lie on the Extracellular side of the membrane; sequence FKIDGLT. The chain crosses the membrane as a helical span at residues 315 to 339; sequence PLTTIWGATFAKTSAVYNPIVYGIS. Residue K326 is modified to N6-(retinylidene)lysine. At 340–381 the chain is on the cytoplasmic side; it reads HPKYRLVLKEKCPMCVCGSTDEPKPDAPPSDTETTSEAESKA. Residues 358–381 are disordered; sequence STDEPKPDAPPSDTETTSEAESKA. Polar residues predominate over residues 370 to 381; it reads DTETTSEAESKA.

The protein belongs to the G-protein coupled receptor 1 family. Opsin subfamily. Some or all of the Ser/Thr residues present in the C-terminal part may be phosphorylated.

The protein localises to the membrane. Visual pigments are the light-absorbing molecules that mediate vision. They consist of an apoprotein, opsin, covalently linked to cis-retinal. This chain is Opsin Rh2 (Rh2), found in Drosophila pseudoobscura pseudoobscura (Fruit fly).